The primary structure comprises 255 residues: 4-diphosphocytidyl-2-C-methyl-D-erythritol kinase (255 aa).

K6 is a catalytic residue. An ATP-binding site is contributed by 95-105; sequence PVCAGLGGGSS. D137 is an active-site residue.

Belongs to the GHMP kinase family. IspE subfamily.

It carries out the reaction 4-CDP-2-C-methyl-D-erythritol + ATP = 4-CDP-2-C-methyl-D-erythritol 2-phosphate + ADP + H(+). It participates in isoprenoid biosynthesis; isopentenyl diphosphate biosynthesis via DXP pathway; isopentenyl diphosphate from 1-deoxy-D-xylulose 5-phosphate: step 3/6. Catalyzes the phosphorylation of the position 2 hydroxy group of 4-diphosphocytidyl-2C-methyl-D-erythritol. The sequence is that of 4-diphosphocytidyl-2-C-methyl-D-erythritol kinase from Campylobacter jejuni subsp. jejuni serotype O:23/36 (strain 81-176).